Here is a 385-residue protein sequence, read N- to C-terminus: tRNA pseudouridine synthase D (385 aa).

D86 functions as the Nucleophile in the catalytic mechanism. Residues 165–305 (GFPNYFGNQR…TRFLQKDIAP (141 aa)) form the TRUD domain.

The protein belongs to the pseudouridine synthase TruD family.

It carries out the reaction uridine(13) in tRNA = pseudouridine(13) in tRNA. In terms of biological role, responsible for synthesis of pseudouridine from uracil-13 in transfer RNAs. The chain is tRNA pseudouridine synthase D from Helicobacter hepaticus (strain ATCC 51449 / 3B1).